Reading from the N-terminus, the 135-residue chain is NAD(P)H-quinone oxidoreductase subunit 3 (135 aa).

The next 3 membrane-spanning stretches (helical) occupy residues Leu-15 to Val-35, Met-79 to Val-99, and Leu-104 to Ala-124.

This sequence belongs to the complex I subunit 3 family. NDH-1 can be composed of about 15 different subunits; different subcomplexes with different compositions have been identified which probably have different functions.

Its subcellular location is the cellular thylakoid membrane. It catalyses the reaction a plastoquinone + NADH + (n+1) H(+)(in) = a plastoquinol + NAD(+) + n H(+)(out). The catalysed reaction is a plastoquinone + NADPH + (n+1) H(+)(in) = a plastoquinol + NADP(+) + n H(+)(out). Functionally, NDH-1 shuttles electrons from an unknown electron donor, via FMN and iron-sulfur (Fe-S) centers, to quinones in the respiratory and/or the photosynthetic chain. The immediate electron acceptor for the enzyme in this species is believed to be plastoquinone. Couples the redox reaction to proton translocation, and thus conserves the redox energy in a proton gradient. Cyanobacterial NDH-1 also plays a role in inorganic carbon-concentration. This chain is NAD(P)H-quinone oxidoreductase subunit 3, found in Synechococcus sp. (strain CC9311).